The following is a 497-amino-acid chain: Probable cytosol aminopeptidase (497 aa).

Mn(2+) is bound by residues K263 and D268. K275 is an active-site residue. Residues D286, D345, and E347 each contribute to the Mn(2+) site. R349 is a catalytic residue.

Belongs to the peptidase M17 family. Mn(2+) serves as cofactor.

The protein resides in the cytoplasm. The catalysed reaction is Release of an N-terminal amino acid, Xaa-|-Yaa-, in which Xaa is preferably Leu, but may be other amino acids including Pro although not Arg or Lys, and Yaa may be Pro. Amino acid amides and methyl esters are also readily hydrolyzed, but rates on arylamides are exceedingly low.. It carries out the reaction Release of an N-terminal amino acid, preferentially leucine, but not glutamic or aspartic acids.. Functionally, presumably involved in the processing and regular turnover of intracellular proteins. Catalyzes the removal of unsubstituted N-terminal amino acids from various peptides. This Rhizobium meliloti (strain 1021) (Ensifer meliloti) protein is Probable cytosol aminopeptidase.